The sequence spans 468 residues: Glutamate--tRNA ligase (468 aa).

The 'HIGH' region signature appears at 8 to 18; it reads PSPTGFLHVGG. Residues C97, C99, C124, and D126 each contribute to the Zn(2+) site. A 'KMSKS' region motif is present at residues 236–240; it reads KLSKR. K239 serves as a coordination point for ATP.

It belongs to the class-I aminoacyl-tRNA synthetase family. Glutamate--tRNA ligase type 1 subfamily. Monomer. Zn(2+) is required as a cofactor.

The protein localises to the cytoplasm. The enzyme catalyses tRNA(Glu) + L-glutamate + ATP = L-glutamyl-tRNA(Glu) + AMP + diphosphate. Its function is as follows. Catalyzes the attachment of glutamate to tRNA(Glu) in a two-step reaction: glutamate is first activated by ATP to form Glu-AMP and then transferred to the acceptor end of tRNA(Glu). The protein is Glutamate--tRNA ligase of Francisella tularensis subsp. novicida (strain U112).